The sequence spans 2547 residues: Piezo-type mechanosensitive ion channel component 1 (2547 aa).

Residues 1-12 (MEPHVLGAGLYW) are Cytoplasmic-facing. A helical transmembrane segment spans residues 13-25 (LLLPCTLLAASLL). Topologically, residues 26 to 28 (RFN) are extracellular. Residues 29–44 (ALSLVYLLFLLLLPWL) traverse the membrane as a helical segment. Residues 45-58 (PGPSRHSIPGHTGR) lie on the Cytoplasmic side of the membrane. A helical transmembrane segment spans residues 59–81 (LLRALLCLSLLFLVAHLAFQICL). The Extracellular portion of the chain corresponds to 82–121 (HTVPHLDQFLGQNGSLWVKVSQHIGVTRLDLKDIFNTTRL). The N-linked (GlcNAc...) asparagine glycan is linked to asparagine 94. Residues 122-138 (VAPDLGVLLASSLCLGL) traverse the membrane as a helical segment. Residues 139-201 (CGRLTRKAGQ…ASRFRVTAHW (63 aa)) lie on the Cytoplasmic side of the membrane. A helical membrane pass occupies residues 202-221 (LLMTSGRTLVIVLLALAGIA). Residues 222–223 (HP) lie on the Extracellular side of the membrane. The helical transmembrane segment at 224–243 (SAFSSIYLVVFLAICTWWSC) threads the bilayer. The Cytoplasmic portion of the chain corresponds to 244–254 (HFPLSPLGFNT). The chain crosses the membrane as a helical span at residues 255–275 (LCVMVSCFGAGHLICLYCYQT). Residues 276 to 316 (PFIQDMLPPGNIWARLFGLKNFVDLPNYSSPNALVLNTKHA) lie on the Extracellular side of the membrane. A helical transmembrane segment spans residues 317–337 (WPIYVSPGILLLLYYTATSLL). Topologically, residues 338–424 (KLHKSCPSEL…EMSPLHGLGH (87 aa)) are cytoplasmic. A disordered region spans residues 347–387 (LRKETPREDEEHELELDHLEPEPQARDATQGEMPMTTEPDL). Over residues 361–371 (ELDHLEPEPQA) the composition is skewed to basic and acidic residues. A helical membrane pass occupies residues 425–445 (LIMDQSYVCALIAMMVWSIMY). Over 446–447 (HS) the chain is Extracellular. The chain crosses the membrane as a helical span at residues 448–463 (WLTFVLLLWACLIWTV). At 464–468 (RSRHQ) the chain is on the cytoplasmic side. A helical transmembrane segment spans residues 469–491 (LAMLCSPCILLYGLTLCCLRYVW). The Extracellular portion of the chain corresponds to 492–518 (AMELPELPTTLGPVSLHQLGLEHTRYP). A helical transmembrane segment spans residues 519–536 (CLDLGAMLLYLLTFWLLL). The Cytoplasmic segment spans residues 537–580 (RQFVKEKLLKKQKVPAALLEVTVADTEPTQTQTLLRSLGELVTG). A helical membrane pass occupies residues 581–601 (IYVKYWIYVCAGMFIVVSFAG). Position 602 (arginine 602) is a topological domain, extracellular. Residues 603 to 623 (LVVYKIVYMFLFLLCLTLFQV) traverse the membrane as a helical segment. Over 624–633 (YYTLWRKLLR) the chain is Cytoplasmic. A helical membrane pass occupies residues 634-655 (VFWWLVVAYTMLVLIAVYTFQF). Residues 656-685 (QDFPTYWRNLTGFTDEQLGDLGLEQFSVSE) are Extracellular-facing. Residues 686 to 702 (LFSSILIPGFFLLACIL) form a helical membrane-spanning segment. Residues 703–811 (QLHYFHRPFM…RRLLELHVFK (109 aa)) lie on the Cytoplasmic side of the membrane. Serine 758 carries the post-translational modification Phosphoserine. A helical transmembrane segment spans residues 812–823 (LVALYTVWVALK). Over 824–826 (EVS) the chain is Extracellular. Residues 827–840 (VMNLLLVVLWAFAL) traverse the membrane as a helical segment. At 841 to 854 (PYPRFRPMASCLST) the chain is on the cytoplasmic side. Residues 855-869 (VWTCIIIVCKMLYQL) form a helical membrane-spanning segment. Topologically, residues 870–921 (KIVNPHEYSSNCTEPFPNNTNLQPLEINQSLLYRGPVDPANWFGVRKGYPNL) are extracellular. A helical membrane pass occupies residues 922-949 (GYIQNHLQILLLLVFEAVVYRRQEHYRR). The Cytoplasmic segment spans residues 950–989 (QHQQAPLPAQAVCADGTRQRLDQDLLSCLKYFINFFFYKF). The helical transmembrane segment at 990–1005 (GLEICFLMAVNVIGQR) threads the bilayer. The Extracellular portion of the chain corresponds to 1006 to 1007 (MN). A helical transmembrane segment spans residues 1008-1023 (FMVILHGCWLVAILTR). Topologically, residues 1024–1036 (RRREAIARLWPNY) are cytoplasmic. Residues 1037-1052 (CLFLTLFLLYQYLLCL) form a helical membrane-spanning segment. Residues 1053–1091 (GMPPALCIDYPWRWSKAIPMNSALIKWLYLPDFFRAPNS) are Extracellular-facing. A helical transmembrane segment spans residues 1092 to 1113 (TNLISDFLLLLCASQQWQVFSA). Over 1114 to 1148 (ERTEEWQRMAGINTDHLEPLRGEPNPIPNFIHCRS) the chain is Cytoplasmic. Residues 1149–1175 (YLDMLKVAVFRYLFWLVLVVVFVAGAT) form a helical membrane-spanning segment. Topologically, residues 1176 to 1180 (RISIF) are extracellular. The chain crosses the membrane as a helical span at residues 1181-1199 (GLGYLLACFYLLLFGTTLL). Over 1200 to 1212 (QKDTRAQLVLWDC) the chain is Cytoplasmic. A helical transmembrane segment spans residues 1213–1231 (LILYNVTVIISKNMLSLLS). The Extracellular segment spans residues 1232-1280 (CVFVEQMQSNFCWVIQLFSLVCTVKGYYDPKEMMTRDRDCLLPVEEAGI). The helical transmembrane segment at 1281 to 1297 (IWDSICFFFLLLQRRIF) threads the bilayer. Over 1298–1656 (LSHYFLHVSA…ELLLDRRLHI (359 aa)) the chain is Cytoplasmic. Residues 1334-1365 (HRQIEEKSLAQLKRQMKRIRAKQEKYRQSQAS) adopt a coiled-coil conformation. Disordered stretches follow at residues 1354–1396 (AKQE…RRQW), 1456–1480 (RRER…DVEP), and 1567–1610 (TLSG…NTRS). Polar residues predominate over residues 1361–1372 (QSQASRGQLQSK). The segment covering 1376-1392 (DPSQEPGPDSPGGSSPP) has biased composition (low complexity). Phosphoserine is present on residues serine 1385 and serine 1390. Positions 1592-1610 (SSMTDDTSSPLSTGYNTRS) are enriched in polar residues. Residues serine 1627, serine 1631, and serine 1646 each carry the phosphoserine modification. A helical transmembrane segment spans residues 1657-1700 (PELEEAERFEAQQGRTLRLLRAGYQCVAAHSELLCYFIIILNHM). Topologically, residues 1701 to 1704 (VTAS) are extracellular. A helical transmembrane segment spans residues 1705-1720 (AASLVLPVLVFLWAML). Over 1721–1728 (TIPRPSKR) the chain is Cytoplasmic. A helical membrane pass occupies residues 1729 to 1747 (FWMTAIVFTEVMVVTKYLF). Residues 1748-1779 (QFGFFPWNSYVVLRRYENKPYFPPRILGLEKT) lie on the Extracellular side of the membrane. The helical transmembrane segment at 1780–1801 (DSYIKYDLVQLMALFFHRSQLL) threads the bilayer. Over 1802-1976 (CYGLWDHEED…HTKYRAATDV (175 aa)) the chain is Cytoplasmic. Composition is skewed to basic and acidic residues over residues 1816-1837 (DHCR…KLES) and 1855-1880 (PRDH…DLKP). Positions 1816–1931 (DHCRSSVKDR…RPRHTQEKSK (116 aa)) are disordered. Residues 1881 to 1894 (RHTRHISIRFRRRK) show a composition bias toward basic residues. Over residues 1912–1931 (GEGKETTERKRPRHTQEKSK) the composition is skewed to basic and acidic residues. A helical transmembrane segment spans residues 1977–1996 (YALMFLADIVDIIIIIFGFW). Residues 1997-2016 (AFGKHSAATDIASSLSDDQV) lie on the Extracellular side of the membrane. The helical transmembrane segment at 2017 to 2033 (PQAFLFMLLVQFGTMVI) threads the bilayer. Topologically, residues 2034–2047 (DRALYLRKTVLGKL) are cytoplasmic. Residues 2048–2068 (AFQVVLVVAIHIWMFFILPAV) traverse the membrane as a helical segment. Topologically, residues 2069 to 2076 (TERMFSQN) are extracellular. Residues 2077 to 2092 (AVAQLWYFVKCIYFAL) traverse the membrane as a helical segment. Residues 2093-2192 (SAYQIRCGYP…KKKIVKYGMG (100 aa)) are Cytoplasmic-facing. Residues 2193 to 2213 (GLIILFLIAIIWFPLLFMSLI) traverse the membrane as a helical segment. The Extracellular segment spans residues 2214–2457 (RSVVGVVNQP…IFSDKVSPPS (244 aa)). A disulfide bond links cysteine 2437 and cysteine 2441. Residues 2458 to 2478 (LGFLAGYGIVGLYVSIVLVVG) form a helical membrane-spanning segment. Residues 2479–2547 (KFVRGFFSEI…TMIKWTRERE (69 aa)) are Cytoplasmic-facing.

This sequence belongs to the PIEZO (TC 1.A.75) family. In terms of assembly, homotrimer; the homotrimer forms a propeller-shaped Piezo channel with a cation-ion conducting pore. Heterotrimeric interaction may occur between PIEZO1 and PIEZO2. Interacts with PKD2. Interacts with STOMl3. Interacts with TMC1, TMC2, PCDG15 and CIB2; the interaction may be part of the MET complex. Interacts with MDFIC (via C-terminus); the interaction prolongs Piezo channel inactivation. Interacts with MDFI (via C-terminus); the interaction prolongs Piezo channel inactivation. In terms of tissue distribution, expressed in bladder, colon, kidney and skin. Also expressed in bone marrow, liver, lung, spleen and erythrocytes (at protein level). Expressed in myoblasts (at protein level). Expressed in red blood cells. Expressed in cochlear inner and outer hair cells (IHCs and OHCs) and vestibular organ HCs.

The protein localises to the endoplasmic reticulum membrane. It localises to the endoplasmic reticulum-Golgi intermediate compartment membrane. Its subcellular location is the cell membrane. The protein resides in the cell projection. It is found in the lamellipodium membrane. It catalyses the reaction K(+)(in) = K(+)(out). It carries out the reaction Na(+)(in) = Na(+)(out). The catalysed reaction is Ca(2+)(in) = Ca(2+)(out). The enzyme catalyses Mg(2+)(in) = Mg(2+)(out). With respect to regulation, regulated by auxillary subunits MDFIC and MDFI. Down-regulated by phosphatidylserines exposed on the cell surface. Divalent ions decrease the single-channel permeability of K(+). Pore-forming subunit of the mechanosensitive non-specific cation Piezo channel required for rapidly adapting mechanically activated (MA) currents and has a key role in sensing touch and tactile pain. Piezo channels are homotrimeric three-blade propeller-shaped structures that utilize a cap-motion and plug-and-latch mechanism to gate their ion-conducting pathways. Generates currents characterized by a linear current-voltage relationship that are sensitive to ruthenium red and gadolinium. Conductance to monovalent alkali ions is highest for K(+), intermediate for Na(+) and lowest for Li(+). Divalent ions except for Mn(2+) permeate the channel but more slowly than the monovalent ions and they also reduce K(+) currents. Plays a key role in epithelial cell adhesion by maintaining integrin activation through R-Ras recruitment to the ER, most probably in its activated state, and subsequent stimulation of calpain signaling. In inner ear hair cells, PIEZO1/2 subunits may constitute part of the mechanotransducer (MET) non-selective cation channel complex where they may act as pore-forming ion-conducting component in the complex. In the kidney, may contribute to the detection of intraluminal pressure changes and to urine flow sensing. Acts as a shear-stress sensor that promotes endothelial cell organization and alignment in the direction of blood flow through calpain activation. Plays a key role in blood vessel formation and vascular structure in both development and adult physiology. Acts as a sensor of phosphatidylserine (PS) flipping at the plasma membrane and governs morphogenesis of muscle cells. In myoblasts, flippase-mediated PS enrichment at the inner leaflet of plasma membrane triggers channel activation and Ca(2+) influx followed by Rho GTPases signal transduction, leading to assembly of cortical actomyosin fibers and myotube formation. In Mus musculus (Mouse), this protein is Piezo-type mechanosensitive ion channel component 1.